A 281-amino-acid chain; its full sequence is Urease accessory protein UreD 2 (281 aa).

Belongs to the UreD family. As to quaternary structure, ureD, UreF and UreG form a complex that acts as a GTP-hydrolysis-dependent molecular chaperone, activating the urease apoprotein by helping to assemble the nickel containing metallocenter of UreC. The UreE protein probably delivers the nickel.

It localises to the cytoplasm. Required for maturation of urease via the functional incorporation of the urease nickel metallocenter. This Pseudomonas syringae pv. tomato (strain ATCC BAA-871 / DC3000) protein is Urease accessory protein UreD 2.